Reading from the N-terminus, the 86-residue chain is Trypsin inhibitor (86 aa).

2 disulfide bridges follow: C8–C65 and C49–C58.

In terms of biological role, serine protease inhibitor which is active against trypsin. Displays strong antifungal activity against a number of phytopathogenic fungi including M.melonis, A.cucumerina, A.solani, C.glaeosporioides and P.capsici. The chain is Trypsin inhibitor from Fagopyrum tataricum (Tartarian buckwheat).